A 1713-amino-acid polypeptide reads, in one-letter code: Serine/threonine-protein kinase MRCK beta (1713 aa).

Positions 76-342 constitute a Protein kinase domain; the sequence is FEIIKVIGRG…IEDFKKHAFF (267 aa). Residues 82–90 and Lys105 each bind ATP; that span reads IGRGAFGEV. Asp200 serves as the catalytic Proton acceptor. Phosphoserine; by autocatalysis occurs at positions 221 and 233. Thr239 bears the Phosphothreonine; by autocatalysis mark. Residues 343–413 form the AGC-kinase C-terminal domain; it reads EGLNWENIRN…TTESCFSDRG (71 aa). Thr423 is subject to Phosphothreonine. Residues 434 to 649 adopt a coiled-coil conformation; that stretch reads LENSLQIEAY…ASKERKLREH (216 aa). Position 671 is an omega-N-methylarginine (Arg671). 2 coiled-coil regions span residues 681 to 815 and 878 to 939; these read QEIS…AHWE and ELQS…FRAD. At Ser927 the chain carries Phosphoserine. Residue Tyr954 is modified to Phosphotyrosine. Residues 971–994 show a composition bias toward polar residues; sequence ASDQETQASKMDLSPSVSVATSTE. The tract at residues 971 to 1022 is disordered; it reads ASDQETQASKMDLSPSVSVATSTEQQEDMARPQQRPSPVPLPSTQALAMAGP. Residues 1026–1076 form a Phorbol-ester/DAG-type zinc finger; that stretch reads AHQFSIKSFPSPTQCSHCTSLMVGLIRQGYACEVCAFSCHVSCKDSAPQVC. A PH domain is found at 1096 to 1215; that stretch reads GTAYKGYVKV…WVGILEGLQA (120 aa). The region spanning 1241–1515 is the CNH domain; sequence IKAVLAAAIV…RPLNSDGSLN (275 aa). One can recognise a CRIB domain in the interval 1585–1598; that stretch reads ISNPTNFNHVAHMG. Positions 1616 to 1713 are disordered; the sequence is TVQEEKQGPT…EGLDQPSCDA (98 aa). Positions 1666–1677 are enriched in basic and acidic residues; it reads DFDKEPDSDSTK. Phosphoserine occurs at positions 1682, 1684, 1688, 1692, and 1695.

This sequence belongs to the protein kinase superfamily. AGC Ser/Thr protein kinase family. DMPK subfamily. As to quaternary structure, homodimer and homotetramer via the coiled coil regions. Interacts tightly with GTP-bound but not GDP-bound CDC42. Interacts with TJP1; this interaction requires the presence of catalytically active CDC42. Forms a tripartite complex with MYO18A and LURAP1 with the latter acting as an adapter connecting CDC42BPB and MYO18A. LURAP1 binding results in activation of CDC42BPB by abolition of its negative autoregulation. Interacts with STRIP1, STRN3 and SIKE1. Interacts with CPNE4 (via VWFA domain). Interacts with LURAP1. Interacts (via AGC-kinase C-terminal domain) with FAM89B/LRAP25 (via LRR repeat). Forms a tripartite complex with FAM89B/LRAP25 and LIMK1. Mg(2+) serves as cofactor. Proteolytically cleaved by caspases upon apoptosis induction.

The protein localises to the cytoplasm. Its subcellular location is the cell membrane. The protein resides in the cell junction. It localises to the cell projection. It is found in the lamellipodium. The catalysed reaction is L-seryl-[protein] + ATP = O-phospho-L-seryl-[protein] + ADP + H(+). The enzyme catalyses L-threonyl-[protein] + ATP = O-phospho-L-threonyl-[protein] + ADP + H(+). With respect to regulation, maintained in an inactive, closed conformation by an interaction between the kinase domain and the negative autoregulatory C-terminal coiled-coil region. Agonist binding to the phorbol ester binding site disrupts this, releasing the kinase domain to allow N-terminus-mediated dimerization and kinase activation by transautophosphorylation. Inhibited by chelerythrine chloride. In terms of biological role, serine/threonine-protein kinase which is an important downstream effector of CDC42 and plays a role in the regulation of cytoskeleton reorganization and cell migration. Regulates actin cytoskeletal reorganization via phosphorylation of PPP1R12C and MYL9/MLC2. In concert with MYO18A and LURAP1, is involved in modulating lamellar actomyosin retrograde flow that is crucial to cell protrusion and migration. Phosphorylates PPP1R12A. In concert with FAM89B/LRAP25 mediates the targeting of LIMK1 to the lamellipodium resulting in its activation and subsequent phosphorylation of CFL1 which is important for lamellipodial F-actin regulation. The protein is Serine/threonine-protein kinase MRCK beta of Mus musculus (Mouse).